Consider the following 113-residue polypeptide: Pancreatic progenitor cell differentiation and proliferation factor B (113 aa).

Belongs to the PPDPF family.

Probable regulator of exocrine pancreas development. This chain is Pancreatic progenitor cell differentiation and proliferation factor B (ppdpf-b), found in Xenopus laevis (African clawed frog).